The chain runs to 208 residues: Cell death-inducing p53-target protein 1 (208 aa).

2 stretches are compositionally biased toward pro residues: residues 1 to 13 and 36 to 67; these read MSSEPPPPYPGGP and MQPPPGMPLPPADIGPPPYEPPGHPMPQPGFI. Positions 1–71 are disordered; the sequence is MSSEPPPPYP…PQPGFIPPHM (71 aa). An LITAF domain is found at 122-206; that stretch reads ATTVTVLQGE…CKAYIYTYKR (85 aa). Positions 142 and 145 each coordinate Zn(2+). Residues 164-184 form a membrane-binding amphipathic helix region; the sequence is LGFFCCFMGCDLGCCLIPCLI. Zn(2+) contacts are provided by C194 and C197.

This sequence belongs to the CDIP1/LITAF family. In terms of tissue distribution, highly expressed in brain. Expressed at lower level in heart, skeletal muscle, kidney, pancreas and liver. Weakly or not expressed in placenta and lung.

It is found in the late endosome membrane. The protein localises to the lysosome membrane. Its function is as follows. Acts as an important p53/TP53-apoptotic effector. Regulates TNF-alpha-mediated apoptosis in a p53/TP53-dependent manner. The sequence is that of Cell death-inducing p53-target protein 1 (CDIP1) from Homo sapiens (Human).